Consider the following 481-residue polypeptide: MGSHVAQKQHVVCVPYPAQGHINPMMKVAKLLYAKGFHITFVNTVYNHNRLLRSRGPNAVDGLPSFRFESIPDGLPETDVDVTQDIPTLCESTMKHCLAPFKELLRQINARDDVPPVSCIVSDGCMSFTLDAAEELGVPEVLFWTTSACGFLAYLYYYRFIEKGLSPIKDESYLTKEHLDTKIDWIPSMKNLRLKDIPSFIRTTNPDDIMLNFIIREADRAKRASAIILNTFDDLEHDVIQSMKSIVPPVYSIGPLHLLEKQESGEYSEIGRTGSNLWREETECLDWLNTKARNSVVYVNFGSITVLSAKQLVEFAWGLAATGKEFLWVIRPDLVAGDEAMVPPEFLTATADRRMLASWCPQEKVLSHPAIGGFLTHCGWNSTLESLCGGVPMVCWPFFAEQQTNCKFSRDEWEVGIEIGGDVKREEVEAVVRELMDEEKGKNMREKAEEWRRLANEATEHKHGSSKLNFEMLVNKVLLGE.

Residues Ser-303, 360-362 (CPQ), 377-385 (HCGWNSTLE), and 399-402 (FAEQ) each bind UDP-alpha-D-glucose.

It belongs to the UDP-glycosyltransferase family. As to expression, expressed in roots, shoots, leaves and flowers.

The chain is UDP-glycosyltransferase 85A2 (UGT85A2) from Arabidopsis thaliana (Mouse-ear cress).